The following is an 807-amino-acid chain: Sucrose synthase 1 (807 aa).

The tract at residues 272–748 is GT-B glycosyltransferase; the sequence is MMFNVVILSP…GLKRIYEKYT (477 aa).

Belongs to the glycosyltransferase 1 family. Plant sucrose synthase subfamily. In terms of assembly, forms homotetramers. In endosperm it forms both homotetramers and heterotetramers with SS2, all three possible heterotetramers are formed. In terms of tissue distribution, highly expressed in developing endosperm and in roots and, at lower levels, in coleoptiles and aleurone. In 3 day old roots it is detected in cap cells and along the vascular strand, starting just after the meristemic region. In 9 day old leaves it is found in the phloem. In seeds it is distributed throughout the endosperm and also found in the assimilate-unloading tissues, the nucellar projection, the vascular area and at a high concentration in the chalazal region.

It carries out the reaction an NDP-alpha-D-glucose + D-fructose = a ribonucleoside 5'-diphosphate + sucrose + H(+). Sucrose-cleaving enzyme that provides UDP-glucose and fructose for various metabolic pathways. The polypeptide is Sucrose synthase 1 (SS1) (Hordeum vulgare (Barley)).